The sequence spans 329 residues: Probable CTD kinase subunit alpha homolog (329 aa).

In terms of domain architecture, Protein kinase spans 22–297 (YEKIRIIGEG…VEQVVGSKYF (276 aa)). Residues 28–36 (IGEGTFGQV) and K49 contribute to the ATP site. Catalysis depends on D139, which acts as the Proton acceptor.

This sequence belongs to the protein kinase superfamily. CMGC Ser/Thr protein kinase family. CDC2/CDKX subfamily. As to quaternary structure, component of the CTDK-I complex.

Its subcellular location is the nucleus. It is found in the nucleolus. The catalysed reaction is [DNA-directed RNA polymerase] + ATP = phospho-[DNA-directed RNA polymerase] + ADP + H(+). In terms of biological role, catalytic subunit of the CTDK-I complex, which hyperphosphorylates the C-terminal heptapeptide repeat domain (CTD) of the largest RNA polymerase II subunit. Involved in RNA polymerase II transcriptional elongation and pre-mRNA 3'-end processing. This chain is Probable CTD kinase subunit alpha homolog (CTK1), found in Encephalitozoon cuniculi (strain GB-M1) (Microsporidian parasite).